The sequence spans 132 residues: Pro-MCH 1 (132 aa).

Residues 1-24 form the signal peptide; that stretch reads MRHYVLSISFAVALFLECYTPSTA. Cys-120 and Cys-129 are disulfide-bonded.

Belongs to the melanin-concentrating hormone family. As to expression, pituitary gland. Produced in neurons of lateral basal hypothalamus which project both to the brain and to the neural lobe of the pituitary gland from where MCH is released.

Functionally, plays a role in skin pigmentation by antagonizing the action of melanotropin alpha. Induces melanin concentration within the melanophores. May participate in the control of the hypothalamo-pituitary adrenal gland axis by inhibiting the release of ACTH. The sequence is that of Pro-MCH 1 (mch1) from Oncorhynchus keta (Chum salmon).